Consider the following 366-residue polypeptide: tRNA/tmRNA (uracil-C(5))-methyltransferase (366 aa).

Residues Q190, Y218, N223, E239, and D299 each coordinate S-adenosyl-L-methionine. C324 functions as the Nucleophile in the catalytic mechanism. E358 acts as the Proton acceptor in catalysis.

Belongs to the class I-like SAM-binding methyltransferase superfamily. RNA M5U methyltransferase family. TrmA subfamily.

It carries out the reaction uridine(54) in tRNA + S-adenosyl-L-methionine = 5-methyluridine(54) in tRNA + S-adenosyl-L-homocysteine + H(+). The enzyme catalyses uridine(341) in tmRNA + S-adenosyl-L-methionine = 5-methyluridine(341) in tmRNA + S-adenosyl-L-homocysteine + H(+). Dual-specificity methyltransferase that catalyzes the formation of 5-methyluridine at position 54 (m5U54) in all tRNAs, and that of position 341 (m5U341) in tmRNA (transfer-mRNA). The sequence is that of tRNA/tmRNA (uracil-C(5))-methyltransferase from Salmonella heidelberg (strain SL476).